Consider the following 600-residue polypeptide: MGRRKIEIKAIKDDRNRSVTFLKRKGGLFKKAHELAVLCSVDVAVIIFGHNKKLYEFSSCDMRETLGRYQYYGPPHEHKGPEDFNGKRDDDDDEDETTPAPEEMQPTTQNPPAVVPAHIPSHPGFQHVNHAPSASPPISNGIPFDPRHGTPQPQGASRPSSRNHLRRVSSNLGPQQHHGTPPPPPQNGFAYIPNPSMYHPNANPNIAQQPRPPQFAHYGPQQPLPPHAIPPHPMPQPVPPHHQAPQHLPQHPHPLAQQTPAMGLSQPPHASIPQVAQPFLPEQGRNSIPPAFPTEQSQPPRPVSLPDVSSADQMVGPLKVETSPSPPHQRSLSSKSRSIFTPIDDRGSVLARHFGLGPPTCESPRTESADVKAEAKQNDSKEIKPPAQPVAPPPPPRTTADAARSQSAPDIKPPPRTNSGQLPSKRPQLKVQIPSENSDRGSATADSSSSTGNQTVTPAKANPDTNHSGVVLPPPSPSAGAILSAGATGPPNPFARPPPPGTASQNSNAYNSNNNIETPISALPSRFVSDALLPSPSSFFPEWGFGRSGPDTNMLPSPLTFPTPAVQTGPGFAREDEQEKKRKSPDSGPSIEGTAKKSKT.

The MADS-box domain maps to 1–61 (MGRRKIEIKA…KKLYEFSSCD (61 aa)). 2 disordered regions span residues 71–518 (YYGP…NIET) and 544–600 (GFGR…KSKT). Over residues 75–89 (PHEHKGPEDFNGKRD) the composition is skewed to basic and acidic residues. Over residues 151–160 (PQPQGASRPS) the composition is skewed to polar residues. Over residues 222-242 (QPLPPHAIPPHPMPQPVPPHH) the composition is skewed to pro residues. A compositionally biased stretch (low complexity) spans 243 to 260 (QAPQHLPQHPHPLAQQTP). Positions 328–339 (HQRSLSSKSRSI) are enriched in polar residues. Residues 364–384 (PRTESADVKAEAKQNDSKEIK) show a composition bias toward basic and acidic residues. A compositionally biased stretch (pro residues) spans 386 to 397 (PAQPVAPPPPPR). A compositionally biased stretch (low complexity) spans 440-452 (RGSATADSSSSTG). Over residues 453–468 (NQTVTPAKANPDTNHS) the composition is skewed to polar residues. A compositionally biased stretch (pro residues) spans 490-501 (PPNPFARPPPPG). Low complexity predominate over residues 503–515 (ASQNSNAYNSNNN).

Belongs to the MEF2 family. Interacts with hsp90. Phosphorylation during asexual development.

It is found in the nucleus. Transcription factor; part of cell wall integrity (CWI) signaling pathway composed of pkcA, the bck1-mkk2-mpka MAPK cascade and the downstream rlmA transcription regulator. The CWI signaling pathway regulates cell wall integrity and pyomelanin formation. CWI also controls oxidative stress response, gliotoxin production, iron adaptation and asexual development. Finally, CWI is constitutively required for A.fumigatus to cope with the temperature increase found in the mammalian lung environment, during infection. Positively regulates the phosphorylation of mpkA. Involved in tolerance to oxidative damage and transcriptional regulation of genes related to oxidative stress adaptation. Directly regulates the expression of regulators of conidiation, including flbB, flbC, brlA, abaA, and rasB, as well as genes involved in cell wall synthesis and remodeling. Specifically associates with the target fumiquinazoline (fmq) cluster genes promoters at conserved motifs (5'-TAWWWWTA-3') during conidiation to supplement mature conidia with fumiquinazoline C. Also controls the DHN-melanin production via binding the promoter of pksP. This Aspergillus fumigatus (strain ATCC MYA-4609 / CBS 101355 / FGSC A1100 / Af293) (Neosartorya fumigata) protein is Transcription factor rlmA.